Here is a 127-residue protein sequence, read N- to C-terminus: uncharacterized protein (127 aa).

Residues 12-32 (FFFLILFYFCIISSFLFLFIF) form a helical membrane-spanning segment.

The protein resides in the membrane. This is an uncharacterized protein from Saccharomyces cerevisiae (strain ATCC 204508 / S288c) (Baker's yeast).